Reading from the N-terminus, the 504-residue chain is Glycerol kinase (504 aa).

Thr13 provides a ligand contact to ADP. ATP is bound by residues Thr13, Thr14, and Ser15. Thr13 is a binding site for sn-glycerol 3-phosphate. Arg17 lines the ADP pocket. The sn-glycerol 3-phosphate site is built by Arg83, Glu84, and Tyr135. Positions 83, 84, and 135 each coordinate glycerol. At His231 the chain carries Phosphohistidine; by HPr. Asp245 contacts sn-glycerol 3-phosphate. Positions 245 and 246 each coordinate glycerol. ADP-binding residues include Thr267 and Gly310. Residues Thr267, Gly310, Gln314, and Gly411 each contribute to the ATP site. ADP contacts are provided by Gly411 and Asn415.

The protein belongs to the FGGY kinase family. Homotetramer and homodimer (in equilibrium). In terms of processing, the phosphoenolpyruvate-dependent sugar phosphotransferase system (PTS), including enzyme I, and histidine-containing protein (HPr) are required for the phosphorylation, which leads to the activation of the enzyme.

The enzyme catalyses glycerol + ATP = sn-glycerol 3-phosphate + ADP + H(+). The protein operates within polyol metabolism; glycerol degradation via glycerol kinase pathway; sn-glycerol 3-phosphate from glycerol: step 1/1. Activated by phosphorylation and inhibited by fructose 1,6-bisphosphate (FBP). In terms of biological role, key enzyme in the regulation of glycerol uptake and metabolism. Catalyzes the phosphorylation of glycerol to yield sn-glycerol 3-phosphate. The protein is Glycerol kinase of Ligilactobacillus salivarius (strain UCC118) (Lactobacillus salivarius).